Consider the following 513-residue polypeptide: Protein disulfide-isomerase (513 aa).

Residues 1 to 25 form the signal peptide; the sequence is MAISKVWISLLLALAVVLSAPAARA. The 124-residue stretch at 26-149 folds into the Thioredoxin 1 domain; it reads EEAAAAEEAA…IVEYLKKQVG (124 aa). Catalysis depends on nucleophile residues Cys-67 and Cys-70. An intrachain disulfide couples Cys-67 to Cys-70. The N-linked (GlcNAc...) asparagine glycan is linked to Asn-282. Positions 369–488 constitute a Thioredoxin 2 domain; sequence FRKSEPIPEA…IVDYIRKNKE (120 aa). Catalysis depends on nucleophile residues Cys-411 and Cys-414. Cys-411 and Cys-414 are oxidised to a cystine. A compositionally biased stretch (low complexity) spans 491 to 507; the sequence is GQAAAATEKAAEPAATE. The interval 491 to 513 is disordered; it reads GQAAAATEKAAEPAATEPLKDEL. Positions 510–513 match the Prevents secretion from ER motif; that stretch reads KDEL.

It belongs to the protein disulfide isomerase family.

Its subcellular location is the endoplasmic reticulum lumen. It carries out the reaction Catalyzes the rearrangement of -S-S- bonds in proteins.. Its function is as follows. Participates in the folding of proteins containing disulfide bonds, may be involved in glycosylation, prolyl hydroxylation and triglyceride transfer. This Hordeum vulgare (Barley) protein is Protein disulfide-isomerase (PDI).